Here is a 199-residue protein sequence, read N- to C-terminus: Holliday junction resolvase RecU (199 aa).

Mg(2+)-binding residues include T82, D84, E97, and Q116.

It belongs to the RecU family. Mg(2+) is required as a cofactor.

Its subcellular location is the cytoplasm. The catalysed reaction is Endonucleolytic cleavage at a junction such as a reciprocal single-stranded crossover between two homologous DNA duplexes (Holliday junction).. In terms of biological role, endonuclease that resolves Holliday junction intermediates in genetic recombination. Cleaves mobile four-strand junctions by introducing symmetrical nicks in paired strands. Promotes annealing of linear ssDNA with homologous dsDNA. Required for DNA repair, homologous recombination and chromosome segregation. The polypeptide is Holliday junction resolvase RecU (Streptococcus pyogenes serotype M1).